Reading from the N-terminus, the 744-residue chain is Eukaryotic translation initiation factor 3 subunit B (744 aa).

Residues 1–21 (MAPSFDHLPDPEEDEYDEEEL) form a disordered region. Over residues 11 to 21 (PEEDEYDEEEL) the composition is skewed to acidic residues. The 87-residue stretch at 40-126 (TFVVIDGLPE…HTLRVNKLTD (87 aa)) folds into the RRM domain. WD repeat units follow at residues 193 to 232 (DRQH…RQKR), 234 to 290 (AHPF…PLRS), 307 to 348 (PIKR…LLDK), and 577 to 622 (ADHY…LREE).

The protein belongs to the eIF-3 subunit B family. As to quaternary structure, component of the eukaryotic translation initiation factor 3 (eIF-3) complex.

It is found in the cytoplasm. In terms of biological role, RNA-binding component of the eukaryotic translation initiation factor 3 (eIF-3) complex, which is involved in protein synthesis of a specialized repertoire of mRNAs and, together with other initiation factors, stimulates binding of mRNA and methionyl-tRNAi to the 40S ribosome. The eIF-3 complex specifically targets and initiates translation of a subset of mRNAs involved in cell proliferation. The sequence is that of Eukaryotic translation initiation factor 3 subunit B (prt1) from Botryotinia fuckeliana (strain B05.10) (Noble rot fungus).